We begin with the raw amino-acid sequence, 492 residues long: Aspartyl/glutamyl-tRNA(Asn/Gln) amidotransferase subunit B (492 aa).

This sequence belongs to the GatB/GatE family. GatB subfamily. As to quaternary structure, heterotrimer of A, B and C subunits.

It carries out the reaction L-glutamyl-tRNA(Gln) + L-glutamine + ATP + H2O = L-glutaminyl-tRNA(Gln) + L-glutamate + ADP + phosphate + H(+). It catalyses the reaction L-aspartyl-tRNA(Asn) + L-glutamine + ATP + H2O = L-asparaginyl-tRNA(Asn) + L-glutamate + ADP + phosphate + 2 H(+). Functionally, allows the formation of correctly charged Asn-tRNA(Asn) or Gln-tRNA(Gln) through the transamidation of misacylated Asp-tRNA(Asn) or Glu-tRNA(Gln) in organisms which lack either or both of asparaginyl-tRNA or glutaminyl-tRNA synthetases. The reaction takes place in the presence of glutamine and ATP through an activated phospho-Asp-tRNA(Asn) or phospho-Glu-tRNA(Gln). The sequence is that of Aspartyl/glutamyl-tRNA(Asn/Gln) amidotransferase subunit B from Dehalococcoides mccartyi (strain ATCC BAA-2266 / KCTC 15142 / 195) (Dehalococcoides ethenogenes (strain 195)).